The following is a 282-amino-acid chain: Pantothenate synthetase (282 aa).

30 to 37 (MGGLHQGH) serves as a coordination point for ATP. The active-site Proton donor is the histidine 37. A (R)-pantoate-binding site is contributed by glutamine 61. Position 61 (glutamine 61) interacts with beta-alanine. 146 to 149 (GQKD) serves as a coordination point for ATP. Position 152 (glutamine 152) interacts with (R)-pantoate. ATP contacts are provided by residues isoleucine 175 and 183 to 186 (MSTR).

Belongs to the pantothenate synthetase family. Homodimer.

Its subcellular location is the cytoplasm. The catalysed reaction is (R)-pantoate + beta-alanine + ATP = (R)-pantothenate + AMP + diphosphate + H(+). The protein operates within cofactor biosynthesis; (R)-pantothenate biosynthesis; (R)-pantothenate from (R)-pantoate and beta-alanine: step 1/1. Its function is as follows. Catalyzes the condensation of pantoate with beta-alanine in an ATP-dependent reaction via a pantoyl-adenylate intermediate. This chain is Pantothenate synthetase, found in Vesicomyosocius okutanii subsp. Calyptogena okutanii (strain HA).